The chain runs to 352 residues: Protein-glutamate methylesterase/protein-glutamine glutaminase 2 (352 aa).

Residues 1-116 (MVVDDSAVVR…KQFLTDSADE (116 aa)) form the Response regulatory domain. D50 is subject to 4-aspartylphosphate. The CheB-type methylesterase domain maps to 162 to 352 (AQTTERIVAI…MAREIVTQLQ (191 aa)). Residues S174, H200, and D296 contribute to the active site.

It belongs to the CheB family. Phosphorylated by CheA. Phosphorylation of the N-terminal regulatory domain activates the methylesterase activity.

It localises to the cytoplasm. The enzyme catalyses [protein]-L-glutamate 5-O-methyl ester + H2O = L-glutamyl-[protein] + methanol + H(+). The catalysed reaction is L-glutaminyl-[protein] + H2O = L-glutamyl-[protein] + NH4(+). Its function is as follows. Involved in chemotaxis. Part of a chemotaxis signal transduction system that modulates chemotaxis in response to various stimuli. Catalyzes the demethylation of specific methylglutamate residues introduced into the chemoreceptors (methyl-accepting chemotaxis proteins or MCP) by CheR. Also mediates the irreversible deamidation of specific glutamine residues to glutamic acid. The chain is Protein-glutamate methylesterase/protein-glutamine glutaminase 2 from Xanthomonas campestris pv. campestris (strain ATCC 33913 / DSM 3586 / NCPPB 528 / LMG 568 / P 25).